The chain runs to 378 residues: MQSAIKPVEYDRPLAAGAACGVGEAWAKVPAPLAAGEREALKARIKALLEREKAVLVAHYYVDAELQELADETGGCVADSLEMARFGRDHGAQTLVVAGVRFMGETAKILSPGKRVLMPDLDATCSLDLGCPVDEFSRFCDAHPDRTVVVYANTSAAVKARADWMVTSSIGLEIVANLHARGEKIIWAPDRHLGGYIQKKTGADMLMWQGSCLVHDEFKGIELDLLRNEYPDAKILVHPESPEGVVALADVVGSTTQLIDAAVKLDAQRFIVATDLGILHKMRLAAPGKTFIEAPTAGNSATCKSCAHCPWMAMNVLSNLADVLERGHNEIFVDAAIAERARVPIDRMLDFAARHKQRVQASGDLLRDQQLFANVGAA.

Iminosuccinate-binding residues include His59 and Ser80. Residue Cys125 participates in [4Fe-4S] cluster binding. Iminosuccinate is bound by residues 151 to 153 (YAN) and Ser168. Cys212 provides a ligand contact to [4Fe-4S] cluster. Iminosuccinate-binding positions include 238-240 (HPE) and Thr255. Position 309 (Cys309) interacts with [4Fe-4S] cluster.

Belongs to the quinolinate synthase family. Type 1 subfamily. The cofactor is [4Fe-4S] cluster.

The protein localises to the cytoplasm. It catalyses the reaction iminosuccinate + dihydroxyacetone phosphate = quinolinate + phosphate + 2 H2O + H(+). It functions in the pathway cofactor biosynthesis; NAD(+) biosynthesis; quinolinate from iminoaspartate: step 1/1. Catalyzes the condensation of iminoaspartate with dihydroxyacetone phosphate to form quinolinate. This chain is Quinolinate synthase, found in Burkholderia thailandensis (strain ATCC 700388 / DSM 13276 / CCUG 48851 / CIP 106301 / E264).